The sequence spans 511 residues: Probable lipid II flippase MurJ (511 aa).

11 helical membrane passes run 25-45, 85-105, 133-153, 156-178, 245-265, 271-291, 315-335, 356-376, 400-420, 442-462, and 481-501; these read DILIASIFGASMFTDAFFISF, SSILGFMSFFLLLLTILGGFF, IMFPYILLISLSSLCSSILNS, YFSIPAFSPIFLNISIIFFSVFF, ISLIINTIFSSLLNSGSISWI, LIEFPVGILGVSLSTVLFTSL, LIVSLPGSVILFFLAKPVIIV, LYSCGLISFIFVKILSSAFYA, FLIFYFQHAGIALSLSITSWV, FIFIIYIILATLVMIVILFVV, and LFFGKYVSGITYLFMMNILGI.

Belongs to the MurJ/MviN family.

The protein resides in the cell inner membrane. The protein operates within cell wall biogenesis; peptidoglycan biosynthesis. Involved in peptidoglycan biosynthesis. Transports lipid-linked peptidoglycan precursors from the inner to the outer leaflet of the cytoplasmic membrane. The sequence is that of Probable lipid II flippase MurJ from Buchnera aphidicola subsp. Acyrthosiphon pisum (strain APS) (Acyrthosiphon pisum symbiotic bacterium).